The sequence spans 271 residues: Peroxisomal biogenesis factor 2 (271 aa).

Over 1-2 the chain is Peroxisomal matrix; the sequence is MS. The chain crosses the membrane as a helical span at residues 3-29; it reads RVAQLDSIALDKELYGQFWSEFNAAFN. The Cytoplasmic segment spans residues 30 to 33; it reads TSEH. Residues 34-60 form a helical membrane-spanning segment; that stretch reads KEEWELALNTVVFMCATRFLPHYGSSC. The Peroxisomal matrix segment spans residues 61 to 77; the sequence is TYGSALSGVVFQCRKRT. Residues 78–97 form a helical membrane-spanning segment; that stretch reads LYVVTVLAGYVWKKITHIIF. The Cytoplasmic segment spans residues 98–101; the sequence is NGPH. A helical transmembrane segment spans residues 102 to 133; the sequence is CGNQMMWLKLYKWVNLLYHGCDVTNFLRFLAA. Residues 134-175 are Peroxisomal matrix-facing; that stretch reads EGPNARAFLSPLYRAFNVHSTRLIRDGSAIASEFYSNSVFAG. A helical membrane pass occupies residues 176 to 197; that stretch reads LEYQNRQLLWNALLELFSNTLL. Topologically, residues 198–271 are cytoplasmic; it reads TKRGLLTFVK…SGRLTASPVY (74 aa). Zn(2+) is bound by residues Cys222, Cys225, Cys237, Cys238, Cys243, Cys246, Cys256, and Cys259. The segment at 222–259 adopts an RING-type zinc-finger fold; that stretch reads CPRCGGFPTNPYQIACCRANYCYVCVVKALEWSMCDAC.

It belongs to the pex2/pex10/pex12 family. Component of the PEX2-PEX10-PEX12 retrotranslocation channel, composed of PEX2, PEX10 and PEX12.

It is found in the peroxisome membrane. It catalyses the reaction [E2 ubiquitin-conjugating enzyme]-S-ubiquitinyl-L-cysteine + [acceptor protein]-L-cysteine = [E2 ubiquitin-conjugating enzyme]-L-cysteine + [acceptor protein]-S-ubiquitinyl-L-cysteine.. It functions in the pathway protein modification; protein ubiquitination. Functionally, E3 ubiquitin-protein ligase component of a retrotranslocation channel required for peroxisome organization by mediating export of the PEX5 receptor from peroxisomes to the cytosol, thereby promoting PEX5 recycling. The retrotranslocation channel is composed of PEX2, PEX10 and PEX12; each subunit contributing transmembrane segments that coassemble into an open channel that specifically allows the passage of PEX5 through the peroxisomal membrane. PEX2 also regulates peroxisome organization by acting as a E3 ubiquitin-protein ligase. PEX2 ubiquitinates PEX5 during its passage through the retrotranslocation channel: catalyzes monoubiquitination of PEX5 at 'Cys-6', a modification that acts as a signal for PEX5 extraction into the cytosol. The protein is Peroxisomal biogenesis factor 2 of Saccharomyces cerevisiae (strain ATCC 204508 / S288c) (Baker's yeast).